A 209-amino-acid polypeptide reads, in one-letter code: Uracil phosphoribosyltransferase (209 aa).

Residues arginine 79, arginine 104, and 131–139 each bind 5-phospho-alpha-D-ribose 1-diphosphate; that span reads DPMLATGGS. Residues isoleucine 194 and 199–201 contribute to the uracil site; that span reads GDA. Aspartate 200 is a 5-phospho-alpha-D-ribose 1-diphosphate binding site.

Belongs to the UPRTase family. Mg(2+) is required as a cofactor.

It catalyses the reaction UMP + diphosphate = 5-phospho-alpha-D-ribose 1-diphosphate + uracil. The protein operates within pyrimidine metabolism; UMP biosynthesis via salvage pathway; UMP from uracil: step 1/1. With respect to regulation, allosterically activated by GTP. Catalyzes the conversion of uracil and 5-phospho-alpha-D-ribose 1-diphosphate (PRPP) to UMP and diphosphate. In Lysinibacillus sphaericus (strain C3-41), this protein is Uracil phosphoribosyltransferase.